Here is a 143-residue protein sequence, read N- to C-terminus: Transmembrane protein 80 (143 aa).

4 helical membrane-spanning segments follow: residues 21–41 (MLFY…LLMI), 55–75 (LVLD…RLYL), 99–119 (ALLS…DWAL), and 121–141 (ATLL…IAAF).

The protein resides in the membrane. Its subcellular location is the cell projection. It is found in the cilium. In Homo sapiens (Human), this protein is Transmembrane protein 80.